The primary structure comprises 892 residues: DNA ligase (892 aa).

The disordered stretch occupies residues 1–23; sequence MTMTNRDDSEQLAWDFDAPESDG. NAD(+) is bound by residues 99-103, 148-149, and Glu-182; these read DAAYD and SL. Residue Lys-184 is the N6-AMP-lysine intermediate of the active site. Positions 205, 244, 369, and 393 each coordinate NAD(+). Zn(2+) is bound by residues Cys-490, Cys-493, Cys-509, and Cys-515. The BRCT domain occupies 810–892; that stretch reads GLPQTLAGKT…KQLLDTGTVE (83 aa).

This sequence belongs to the NAD-dependent DNA ligase family. LigA subfamily. It depends on Mg(2+) as a cofactor. Mn(2+) is required as a cofactor.

The catalysed reaction is NAD(+) + (deoxyribonucleotide)n-3'-hydroxyl + 5'-phospho-(deoxyribonucleotide)m = (deoxyribonucleotide)n+m + AMP + beta-nicotinamide D-nucleotide.. In terms of biological role, DNA ligase that catalyzes the formation of phosphodiester linkages between 5'-phosphoryl and 3'-hydroxyl groups in double-stranded DNA using NAD as a coenzyme and as the energy source for the reaction. It is essential for DNA replication and repair of damaged DNA. The chain is DNA ligase from Bifidobacterium adolescentis (strain ATCC 15703 / DSM 20083 / NCTC 11814 / E194a).